Reading from the N-terminus, the 140-residue chain is MPDMKPVQDIHAHHLGKWAENQALNILQANGFKLVIRNFHSRVGEIDLIVAKADELIFVEVKARTLGSYAAANEVLLVSQQRKIIKTAQYFLNRYPDYQQFYCRFDVICFDFPHKIAKTVQQDFSKLRYDQQWIENAFTL.

It belongs to the UPF0102 family.

The protein is UPF0102 protein ACIAD1132 of Acinetobacter baylyi (strain ATCC 33305 / BD413 / ADP1).